Here is a 178-residue protein sequence, read N- to C-terminus: Large ribosomal subunit protein uL6 (178 aa).

It belongs to the universal ribosomal protein uL6 family. In terms of assembly, part of the 50S ribosomal subunit.

Its function is as follows. This protein binds to the 23S rRNA, and is important in its secondary structure. It is located near the subunit interface in the base of the L7/L12 stalk, and near the tRNA binding site of the peptidyltransferase center. The polypeptide is Large ribosomal subunit protein uL6 (Francisella tularensis subsp. holarctica (strain FTNF002-00 / FTA)).